The sequence spans 282 residues: Trans,polycis-polyprenyl diphosphate synthase ((2Z,6E)-farnesyl diphosphate specific) (282 aa).

Positions methionine 1–leucine 30 are disordered. Residue aspartate 44 is part of the active site. Aspartate 44 contacts Mg(2+). Residues glycine 45–arginine 48, tryptophan 49, arginine 57, histidine 61, and serine 89–glutamate 91 contribute to the substrate site. Asparagine 92 functions as the Proton acceptor in the catalytic mechanism. Substrate-binding positions include tryptophan 93, arginine 95, arginine 212, and arginine 218–serine 220. Glutamate 231 serves as a coordination point for Mg(2+). A disordered region spans residues glycine 262–aspartate 282.

This sequence belongs to the UPP synthase family. As to quaternary structure, homodimer. Requires Mg(2+) as cofactor.

The enzyme catalyses (2Z,6E)-farnesyl diphosphate + 10 isopentenyl diphosphate = di-trans,deca-cis-tridecaprenyl diphosphate + 10 diphosphate. The catalysed reaction is (2Z,6E)-farnesyl diphosphate + 11 isopentenyl diphosphate = di-trans,undeca-cis-tetradecaprenyl diphosphate + 11 diphosphate. It carries out the reaction (2Z,6E)-farnesyl diphosphate + 9 isopentenyl diphosphate = di-trans,nona-cis-dodecaprenyl diphosphate + 9 diphosphate. In terms of biological role, catalyzes the synthesis of Z,E-mixed prenyl diphosphates by a condensation of isopentenyl diphosphate to an allylic diphosphate. It shows a large substrate specificity accepting dimethylallyl diphosphate (DMAPP), GPP, E,Efarnesyl diphosphate (FPP), E,E,E-geranylgeranyl diphosphate (GGPP), neryl diphosphate (Z-GPP), and (2Z,6E)-farnesyl diphosphate (Z,E-FPP) as allylic substrates. The enzyme exhibits the highest activity when Z,E-FPP is employed as an allylic substrate. The major product is dodecaprenyl diphosphate (C60) under every allylic substrate conditions, but the enzyme is also able to synthesize even C70 prenyl diphosphate as the maximum chain-length product. The chain is Trans,polycis-polyprenyl diphosphate synthase ((2Z,6E)-farnesyl diphosphate specific) from Thermobifida fusca (strain YX).